The following is a 263-amino-acid chain: Gap junction beta-6 protein (263 aa).

The Cytoplasmic portion of the chain corresponds to 1–19 (MDWGALQTILGGVNKHSTS). A helical transmembrane segment spans residues 20–40 (IGKIWLTVLFIFRIMILVVAA). At 41-75 (ERVWGDEQDDFICNTLQPGCKNVCYDHFFPISHIR) the chain is on the extracellular side. The helical transmembrane segment at 76-96 (LWALQLIFVSTPALLVAMHVA) threads the bilayer. The Cytoplasmic portion of the chain corresponds to 97–137 (YRRHEKKRQFRKGDQKCEYKDIEEIRTQRFRIEGTLWWTYT). The chain crosses the membrane as a helical span at residues 138–158 (CSIFFRLVFEAVFMYAFYFMY). Topologically, residues 159-189 (DGFRMPRLMKCSAWPCPNTVDCFVSRPTEKT) are extracellular. Residues 190–210 (VFTIFMIAVSSICILLNVAEL) form a helical membrane-spanning segment. The Cytoplasmic segment spans residues 211-263 (CYLLTKFFLRRSRKAGNQKHHPNHENKEETKQNEMNELISDSCQNTVIGFTSS).

The protein belongs to the connexin family. Beta-type (group I) subfamily. A connexon is composed of a hexamer of connexins. As to expression, exclusively expressed in the cochlea of the inner ear, where it is found in cells of the tegmentum vasculosum, cuboidal cells, supporting cells and clear cells.

The protein localises to the cell membrane. Its subcellular location is the cell junction. It localises to the gap junction. Its function is as follows. One gap junction consists of a cluster of closely packed pairs of transmembrane channels, the connexons, through which materials of low MW diffuse from one cell to a neighboring cell. The polypeptide is Gap junction beta-6 protein (GJB6) (Gallus gallus (Chicken)).